Consider the following 159-residue polypeptide: Large ribosomal subunit protein bL17 (159 aa).

Residues 124-135 are compositionally biased toward low complexity; the sequence is EANRATRAAASK. Residues 124-159 form a disordered region; that stretch reads EANRATRAAASKQAEEAKAEEAEATEAEAEETTEEK. Acidic residues predominate over residues 145 to 159; it reads AEATEAEAEETTEEK.

It belongs to the bacterial ribosomal protein bL17 family. Part of the 50S ribosomal subunit. Contacts protein L32.

This chain is Large ribosomal subunit protein bL17, found in Corynebacterium aurimucosum (strain ATCC 700975 / DSM 44827 / CIP 107346 / CN-1) (Corynebacterium nigricans).